We begin with the raw amino-acid sequence, 659 residues long: DNA ligase (659 aa).

Residues 32-36 (DAEYD), 81-82 (SL), and Glu-110 contribute to the NAD(+) site. The active-site N6-AMP-lysine intermediate is the Lys-112. NAD(+) is bound by residues Arg-133, Glu-168, Lys-284, and Lys-308. Positions 402, 405, 420, and 425 each coordinate Zn(2+). A BRCT domain is found at 582 to 659 (AKPQIFAGKS…SEEEFAELLP (78 aa)).

This sequence belongs to the NAD-dependent DNA ligase family. LigA subfamily. Mg(2+) serves as cofactor. Requires Mn(2+) as cofactor.

The catalysed reaction is NAD(+) + (deoxyribonucleotide)n-3'-hydroxyl + 5'-phospho-(deoxyribonucleotide)m = (deoxyribonucleotide)n+m + AMP + beta-nicotinamide D-nucleotide.. Its function is as follows. DNA ligase that catalyzes the formation of phosphodiester linkages between 5'-phosphoryl and 3'-hydroxyl groups in double-stranded DNA using NAD as a coenzyme and as the energy source for the reaction. It is essential for DNA replication and repair of damaged DNA. The polypeptide is DNA ligase (Desulfitobacterium hafniense (strain Y51)).